The chain runs to 192 residues: Thymidine kinase (192 aa).

ATP contacts are provided by residues 9–16 (GAMNSGKT) and 85–88 (DEAQ). Catalysis depends on Glu-86, which acts as the Proton acceptor. Positions 143, 146, 180, and 183 each coordinate Zn(2+).

This sequence belongs to the thymidine kinase family. Homotetramer.

It localises to the cytoplasm. It catalyses the reaction thymidine + ATP = dTMP + ADP + H(+). This is Thymidine kinase from Lactiplantibacillus plantarum (strain ATCC BAA-793 / NCIMB 8826 / WCFS1) (Lactobacillus plantarum).